The chain runs to 191 residues: ATP-dependent Clp protease proteolytic subunit 1 (191 aa).

Residue Ser91 is the Nucleophile of the active site. His116 is a catalytic residue.

This sequence belongs to the peptidase S14 family. In terms of assembly, fourteen ClpP subunits assemble into 2 heptameric rings which stack back to back to give a disk-like structure with a central cavity, resembling the structure of eukaryotic proteasomes.

It is found in the cytoplasm. The enzyme catalyses Hydrolysis of proteins to small peptides in the presence of ATP and magnesium. alpha-casein is the usual test substrate. In the absence of ATP, only oligopeptides shorter than five residues are hydrolyzed (such as succinyl-Leu-Tyr-|-NHMec, and Leu-Tyr-Leu-|-Tyr-Trp, in which cleavage of the -Tyr-|-Leu- and -Tyr-|-Trp bonds also occurs).. Functionally, cleaves peptides in various proteins in a process that requires ATP hydrolysis. Has a chymotrypsin-like activity. Plays a major role in the degradation of misfolded proteins. The polypeptide is ATP-dependent Clp protease proteolytic subunit 1 (Chlamydia pneumoniae (Chlamydophila pneumoniae)).